The following is a 125-amino-acid chain: Cytochrome c' (125 aa).

Heme c is bound by residues Arg-10, Glu-67, Cys-116, Cys-119, and His-120.

In terms of assembly, homodimer. Post-translationally, binds 1 heme c group covalently per subunit.

Functionally, cytochrome c' is the most widely occurring bacterial c-type cytochrome. Cytochromes c' are high-spin proteins and the heme has no sixth ligand. Their exact function is not known. This is Cytochrome c' from Pararhodospirillum photometricum (Rhodospirillum photometricum).